The following is a 1714-amino-acid chain: MANSSAGSAADHRNKHLSVNPPHQIFKDIQGSDNAIPLSPQWLLSKPGENKTGMGTGDPNQYGNHSDVVRTTGNGEETLDNLKKKDVFRPSLLDAESGRRDRWRDEERDTLSSVRNDRWRNGDKDSGDNKKVDRWDNVAPKFGEQRRGPNDRWTDSGNKDAAPEQRRESKWNSRWGPDDKEAEIPRNKWDEPGKDGEIIREKGPSLPTSDGDHYRPWRPSQGRGRGEALHNQSTPNKQVTSFSHSRGRGENTAIFSAGRGRMSPGGSIFTSAPNQSHPPGSASDKGESGPGEPPHLRYSRMKLLDVYRMADTECYEKFPDGFIEVPSLTSEEPTDPLALCAPSSDEVNVLDAIEKGKIVSSGAPQTSKDGPTGRNPVEFSQPRRIRPAGSREDMTFGAEESKDESGETRNYPDDKFRPEASHEGYAPFRRGNEAPVRELKEPSMQGNAHVQSASPWRQSSGGERSNRNSHDWNDPSADSRLKSSDSVWSHPKDSINHLGGNNMMLPQSKGESRWQISEDPSLRRQPSLVFDREQEVRKLLPSSPEELSLYYKDPQGLIQGPFSGSDIIGWFEAGYFGIDLLVRLASAPNDSPFSLLGDVMPHLRAKSGPPPGFTGAKQNEFVDAAGTSAFPGVGKVHSGMGETDMLQNDMRYKHVAGTVAENRFIESLMSGGLTNSAQGVQGYGVNSSGGLSLPVTDGGADMYLLAKKLELERQRSIPSPYSYWPGRESANLMPGSENVSENAQQPTRSPSSDLLSILQGVTDRSSPAVSGPLPAWSQPIQKESDLHHAKTFQTQIPFGVQQQRLPEQNLPLSGLLGQPMENNPGGMLSPDMMLAAGLSQEHQSLNLLQQQQLLLQLNAQTPLSAQHQRLLVEKMLLLKHQHKQEEQQQLLRQQQQLYSQVFADQQRSQQRFGDPSYGQLQASLDALRLQPSKDMSQVNQQVQVPVSHEERGINLADLLPVTHATNQTVASFETPSLHLQNQLFGNVDPRMVLPDQIDDTHKKESKSEYERTVSADYVNSLYSEKPVLSPGYHATHNVEEPVSYPNNESSTATMTAPEIVESKLLEEQSKDMYAGKGEVSIELSGETPATEVKNNDVSVARKTSEKKSRKQRAKQAADLAKSTSRAPLQETKKPQPGSADDSEIKGKTKKSADTLIDNDTHLIKSSTATASNTSQMSSEVDSVRGEESSLQNTRTQPGRAWKPAPGFKPKSLLEIQMEEQRVAQAEALAPKISSTVNSVGSAAPWAGIVTNSDSNILRETHGESAITQTGVVKPESVPTLKAKKSHLHDLLADDVFAKSSDKEREVMEIISNNDAFMQVTTTNAESFDDDNFIDARETKKSRKKSARAKTSGAKIAAHVPAVDTSLQTNSVEKGKSSRILQQQEKEVLPAIPSGPSLGDFVLWKGESVNNPPPAAAWSSGPKKSTKPSSLRDIVKEQEKMTTSSHPPPSPVPTTQKAIPPQAHQGGASWSRSASSPSQAVSQSSSQSKSKGDDDLFWGPVEQSTQDTKQGDFPHLTSQNSWGTKNTPGKVNAGTSLNRQKSVSMGSADRVLSSPVVTQASHKGKKEAVTKLTEANGFRDWCKSECLRLLGSEDTSVLEFCLKLSRSEAETLLIENLGSRDPDHKFIDKFLNYKDLLPSEVVEIAFQSKGSGVGTRNNTGEDYYYNTTAANDGFSKVGGKKKAKKGKKVSLSASVLGFNVVSNRIMMGEIQTIED.

Disordered stretches follow at residues Met-1–Leu-296 and Ile-358–Glu-511. A Phosphoserine modification is found at Ser-39. Residues Asp-58–Gly-75 are compositionally biased toward polar residues. Basic and acidic residues-rich tracts occupy residues Glu-96–Asp-136 and Gly-143–Gly-203. Composition is skewed to polar residues over residues His-230–His-244 and Ile-268–Pro-278. Basic and acidic residues-rich tracts occupy residues Gly-389 to His-422 and Arg-430 to Glu-441. The span at Met-444 to Glu-463 shows a compositional bias: polar residues. Positions Arg-464–Ser-483 are enriched in basic and acidic residues. The 52-residue stretch at Glu-546–Gly-597 folds into the GYF domain. Disordered stretches follow at residues Glu-728–Asp-753, Val-1092–Pro-1205, and Gln-1437–Glu-1566. Polar residues predominate over residues Glu-737–Asp-753. Basic and acidic residues predominate over residues Ser-1142–Leu-1162. A compositionally biased stretch (polar residues) spans Ile-1163–Val-1180. Over residues Ala-1467–Lys-1488 the composition is skewed to low complexity. Polar residues predominate over residues Leu-1515–Met-1544.

Associates with eIF4E initiation factors and the ribosome complex, thus likely contributing to the proper translation of target proteins. Interacts directly with RPL18B and eIF4E1. Binds to SMG7. In terms of processing, quickly phosphorylated at Ser-39 after treatment of seedlings with the pathogen-associated molecular pattern (PAMP) flg22. In terms of tissue distribution, expressed in all tissues, mostly in flowers, leaves and stems, and, to a lower extent, in roots (at protein level).

Its subcellular location is the cytoplasm. The protein localises to the cytosol. The protein resides in the P-body. Translational repressor involved in the negative regulation of immune receptor accumulation via the inhibition of nucleotide-binding leucine-rich repeat (NLR) receptor mediated defense. Represses NLR protein accumulation (e.g. SNC1, RPS4, RPM1 and RPS2). Together with SMG7, helps to restrict effector-triggered immunity (ETI) cell death induction during pathogen infection in a salicylic acid- (SA) and reactive oxygen species- (ROS) independent manner. Required for pathogen-associated molecular pattern (PAMP)-induced suppression of necrotrophic fungal (e.g. F.moniliforme) pathogen-derived mycotoxin-triggered (e.g. fumonisin B1) cell death. Functionally, (Microbial infection) Required for early steps of plantago asiatica mosaic virus (PlAMV, genus Potexvirus) infection. Facilitates pathogenic growth of avirulent hemi-biotrophic bacteria P.syringae pv. tomato (Pst) DC3000 (e.g. AvrRps4 and AvrRpm1) and of the compatible oomycete H.arabidopsidis Noco2. This is Protein ESSENTIAL FOR POTEXVIRUS ACCUMULATION 1 from Arabidopsis thaliana (Mouse-ear cress).